Reading from the N-terminus, the 205-residue chain is Small ribosomal subunit protein uS5 (205 aa).

The tract at residues 1 to 25 (MSGAQRGQRGGERRGGRDDRRGQGA) is disordered. Residues 9 to 24 (RGGERRGGRDDRRGQG) are compositionally biased toward basic and acidic residues. The region spanning 30-93 (YIERVVAINR…EEAKKHFFRV (64 aa)) is the S5 DRBM domain.

Belongs to the universal ribosomal protein uS5 family. In terms of assembly, part of the 30S ribosomal subunit. Contacts proteins S4 and S8.

In terms of biological role, with S4 and S12 plays an important role in translational accuracy. Located at the back of the 30S subunit body where it stabilizes the conformation of the head with respect to the body. In Nocardioides sp. (strain ATCC BAA-499 / JS614), this protein is Small ribosomal subunit protein uS5.